The chain runs to 370 residues: Peptidyl-prolyl cis-trans isomerase D (370 aa).

Serine 5 is modified (phosphoserine). The region spanning phenylalanine 19–glutamate 183 is the PPIase cyclophilin-type domain. Lysine 171 bears the N6-acetyllysine mark. Residues lysine 185–aspartate 215 form a chaperone activity region. Residue serine 198 is modified to Phosphoserine. An interaction with HSP90AB1 region spans residues lysine 214–alanine 370. TPR repeat units lie at residues threonine 223–serine 256, leucine 273–asparagine 306, and threonine 307–aspartate 340.

This sequence belongs to the cyclophilin-type PPIase family. PPIase D subfamily. Identified in ESR1 or NR3C1/GCR steroid receptor-chaperone complexes. Found in HSP90 chaperone complexes with kinase clients LCK or EIF2AK1. Two monomers associate with one HSP90 homodimer. Interacts with HSP90AA1. Interacts with HSP90AB1; PPID and FKBP4 compete for binding to HSP90AB1 and the interaction is mutually exclusive with the PPID:HSPA8 interaction. Interacts with HSPA8; PPID and STIP1 but not FKBP4 compete for binding to HSPA8 and the interaction is mutually exclusive with the PPID:HSP90AB1 interaction. Interacts with S100A1 and S100A2; the interactions dissociate the PPID:HSP90AA1 interaction. Interacts with S100A6. Interacts with MYB, ILF2, XRCC6, RACK1 and RPS3. Interacts with cytoplasmic dynein 1 intermediate chain (DYNC1I1 or DYNC1I2). In terms of tissue distribution, widely expressed.

It is found in the cytoplasm. Its subcellular location is the nucleus. It localises to the nucleolus. The protein localises to the nucleoplasm. It catalyses the reaction [protein]-peptidylproline (omega=180) = [protein]-peptidylproline (omega=0). With respect to regulation, less sensitive to inhibition by cyclosporin A than is CYP-18. In terms of biological role, PPIase that catalyzes the cis-trans isomerization of proline imidic peptide bonds in oligopeptides and may therefore assist protein folding. Proposed to act as a co-chaperone in HSP90 complexes such as in unligated steroid receptors heterocomplexes. Different co-chaperones seem to compete for association with HSP90 thus establishing distinct HSP90-co-chaperone-receptor complexes with the potential to exert tissue-specific receptor activity control. May have a preference for estrogen receptor complexes and is not found in glucocorticoid receptor complexes. May be involved in cytoplasmic dynein-dependent movement of the receptor from the cytoplasm to the nucleus. May regulate MYB by inhibiting its DNA-binding activity. Involved in regulation of AHR signaling by promoting the formation of the AHR:ARNT dimer; the function is independent of HSP90 but requires the chaperone activity. Involved in regulation of UV radiation-induced apoptosis. Promotes cell viability in anaplastic lymphoma kinase-positive anaplastic large-cell lymphoma (ALK+ ALCL) cell lines. Functionally, (Microbial infection) May be involved in hepatitis C virus (HCV) replication and release. This is Peptidyl-prolyl cis-trans isomerase D from Homo sapiens (Human).